The sequence spans 290 residues: Arylamine N-acetyltransferase 2 (290 aa).

Cysteine 68 (acyl-thioester intermediate) is an active-site residue. Residues threonine 103 and glycine 104 each coordinate CoA. 106–107 contacts substrate; that stretch reads VH. Active-site residues include histidine 107 and aspartate 122. Residues tyrosine 208, threonine 214, and serine 287 each contribute to the CoA site.

This sequence belongs to the arylamine N-acetyltransferase family.

Its subcellular location is the cytoplasm. It catalyses the reaction an arylamine + acetyl-CoA = an N-acetylarylamine + CoA. The catalysed reaction is an N-hydroxyarylamine + acetyl-CoA = an N-acetoxyarylamine + CoA. Catalyzes the N- or O-acetylation of various arylamine and heterocyclic amine substrates. Participates in the detoxification of a plethora of hydrazine and arylamine drugs, and is able to bioactivate several known carcinogens. The protein is Arylamine N-acetyltransferase 2 (NAT2) of Homo sapiens (Human).